A 137-amino-acid chain; its full sequence is L-ectoine synthase (137 aa).

The interval 115 to 137 (EVHDESGAYPADPELAREPVAAD) is disordered.

This sequence belongs to the ectoine synthase family.

The catalysed reaction is (2S)-4-acetamido-2-aminobutanoate = L-ectoine + H2O. Its pathway is amine and polyamine biosynthesis; ectoine biosynthesis; L-ectoine from L-aspartate 4-semialdehyde: step 3/3. Functionally, catalyzes the circularization of gamma-N-acetyl-alpha,gamma-diaminobutyric acid (ADABA) to ectoine (1,4,5,6-tetrahydro-2-methyl-4-pyrimidine carboxylic acid), which is an excellent osmoprotectant. The sequence is that of L-ectoine synthase from Sphingopyxis alaskensis (strain DSM 13593 / LMG 18877 / RB2256) (Sphingomonas alaskensis).